A 160-amino-acid polypeptide reads, in one-letter code: Ribosome-binding factor A (160 aa).

A compositionally biased stretch (basic and acidic residues) spans 112–122 (KARQSDEKVRE). The segment at 112–160 (KARQSDEKVREASAGATYAGEADPYRKPDEDETDTEGAVEADETDDTAK) is disordered. Over residues 141–160 (EDETDTEGAVEADETDDTAK) the composition is skewed to acidic residues.

This sequence belongs to the RbfA family. In terms of assembly, monomer. Binds 30S ribosomal subunits, but not 50S ribosomal subunits or 70S ribosomes.

The protein localises to the cytoplasm. In terms of biological role, one of several proteins that assist in the late maturation steps of the functional core of the 30S ribosomal subunit. Associates with free 30S ribosomal subunits (but not with 30S subunits that are part of 70S ribosomes or polysomes). Required for efficient processing of 16S rRNA. May interact with the 5'-terminal helix region of 16S rRNA. In Streptomyces coelicolor (strain ATCC BAA-471 / A3(2) / M145), this protein is Ribosome-binding factor A.